The following is a 3084-amino-acid chain: Highly reducing polyketide synthase sdnO (3084 aa).

The Ketosynthase family 3 (KS3) domain maps to 4 to 430; it reads PIPLAVVGIA…GTNAHAVLEK (427 aa). Residues C178, H313, and H353 each act as for beta-ketoacyl synthase activity in the active site. Residues 541–841 are malonyl-CoA:ACP transacylase (MAT) domain; that stretch reads FIFTGQGAQW…LAGPLRQSVA (301 aa). S632 (for malonyltransferase activity) is an active-site residue. An N-terminal hotdog fold region spans residues 931–1071; it reads HDLLGLRMTD…GSVLIDLVSS (141 aa). The segment at 931 to 1243 is dehydratase (DH) domain; that stretch reads HDLLGLRMTD…RSAEADMLVF (313 aa). Residues 931–1275 form the PKS/mFAS DH domain; that stretch reads HDLLGLRMTD…LRSLAALDGA (345 aa). H963 (proton acceptor; for dehydratase activity) is an active-site residue. The C-terminal hotdog fold stretch occupies residues 1099-1275; that stretch reads LQPGEDIPPS…LRSLAALDGA (177 aa). The active-site Proton donor; for dehydratase activity is D1177. The tract at residues 1733–2045 is enoylreductase (ER) domain; sequence GTAHAATFVE…RHENMTKYVV (313 aa). The segment at 2069-2252 is catalytic ketoreductase (KRc) domain; it reads ATYVVAGGLG…YMALNIGLIE (184 aa). A Carrier domain is found at 2363 to 2440; it reads DIEAFAARAI…ALARKVTLRS (78 aa). O-(pantetheine 4'-phosphoryl)serine is present on S2400. The disordered stretch occupies residues 2445–2501; the sequence is GGAGGDASSTGNSESMARTPSDSSTVPTSIPATPSRSPSREPPAKETLTKSQQHLPI. Over residues 2456-2481 the composition is skewed to polar residues; that stretch reads NSESMARTPSDSSTVPTSIPATPSRS. The segment covering 2482–2492 has biased composition (basic and acidic residues); the sequence is PSREPPAKETL. The choline/carnitine acyltransferase domain stretch occupies residues 2864 to 3084; the sequence is HFYSQLNRAF…LGVVRRVVEG (221 aa).

It participates in antibiotic biosynthesis. Highly reducing polyketide synthase; part of the gene cluster that mediates the biosynthesis of sordarin and hypoxysordarin, glycoside antibiotics with a unique tetracyclic diterpene aglycone structure. First, the geranylgeranyl diphosphate synthase sdnC constructs GGDP from farnesyl diphosphate and isopentenyl diphosphate. The diterpene cyclase sdnA then catalyzes the cyclization of GGDP to afford cycloaraneosene. Cycloaraneosene is then hydroxylated four times by the putative cytochrome P450 monooxygenases sdnB, sdnE, sdnF and sdnH to give a hydroxylated cycloaraneosene derivative such as cycloaraneosene-8,9,13,19-tetraol. Although the order of the hydroxylations is unclear, at least C8, C9 and C13 of the cycloaraneosene skeleton are hydroxylated before the sordaricin formation. Dehydration of the 13-hydroxy group of the hydroxylated cycloaraneosene derivative might be catalyzed by an unassigned hypothetical protein such as sdnG and sdnP to construct the cyclopentadiene moiety. The FAD-dependent oxidoreductase sdnN is proposed to catalyze the oxidation at C9 of the hydroxylated cycloaraneosene derivative and also catalyze the Baeyer-Villiger oxidation to give the lactone intermediate. The presumed lactone intermediate would be hydrolyzed to give an acrolein moiety and a carboxylate moiety. Then, [4+2]cycloaddition would occur between the acrolein moiety and the cyclopentadiene moiety to give sordaricin. SdnN might also be involved in the [4+2]cycloaddition after the hypothesized oxidation to accommodate the oxidized product and prompt the [4+2]cycloaddition. GDP-6-deoxy-D-altrose may be biosynthesized from GDP-D-mannose by the putative GDP-mannose-4,6-dehydratase sdnI and the short-chain dehydrogenase sdnK. The glycosyltransferase sdnJ catalyzes the attachment of 6-deoxy-D-altrose onto the 19-hydroxy group of sordaricin to give 4'-O-demethylsordarin. The methyltransferase sdnD would complete the biosynthesis of sordarin. Sordarin can be further modified into hypoxysordarin. The unique acyl chain at the 3'-hydroxy group of hypoxysordarin would be constructed by an iterative type I PKS sdnO and the trans-acting polyketide methyltransferase sdnL. SdnL would be responsible for the introduction of an alpha-methyl group of the polyketide chain. Alternatively, the putative beta-lactamase-like sdnR might be responsible for the cleavage and transfer of the polyketide chain from the PKS sdnO to sordarin. Two putative cytochrome P450 monooxygenases, sdnQ and sdnT, might catalyze the epoxidations of the polyketide chain to complete the biosynthesis of hypoxysordarin. Transcriptional regulators sdnM and sdnS are presumably encoded for the transcriptional regulation of the expression of the sdn gene cluster. The sequence is that of Highly reducing polyketide synthase sdnO from Sordaria araneosa (Pleurage araneosa).